A 237-amino-acid chain; its full sequence is MOB kinase activator 2 (237 aa).

Positions 1–21 are disordered; the sequence is MDWLMGKSKAKPNGKKPAAEE. Residues cysteine 78, cysteine 83, histidine 157, and histidine 162 each contribute to the Zn(2+) site. The span at 217–229 shows a compositional bias: gly residues; sequence GGSGDGAGSGGPG. Residues 217-237 form a disordered region; sequence GGSGDGAGSGGPGAQNHVKER.

This sequence belongs to the MOB1/phocein family. As to quaternary structure, binds STK38 and STK38L. Post-translationally, phosphorylated.

It is found in the nucleus. It localises to the cytoplasm. The protein localises to the perinuclear region. In terms of biological role, stimulates the autophosphorylation and kinase activity of STK38 and STK38L. The sequence is that of MOB kinase activator 2 (MOB2) from Homo sapiens (Human).